The chain runs to 92 residues: Small ribosomal subunit protein uS19c (92 aa).

It belongs to the universal ribosomal protein uS19 family.

The protein resides in the plastid. The protein localises to the chloroplast. Functionally, protein S19 forms a complex with S13 that binds strongly to the 16S ribosomal RNA. The chain is Small ribosomal subunit protein uS19c (rps19) from Pinus thunbergii (Japanese black pine).